Here is a 321-residue protein sequence, read N- to C-terminus: Transmembrane protein fend (321 aa).

An N-terminal signal peptide occupies residues Met1 to Ala18. Topologically, residues Gln19–Gly261 are extracellular. Residues Val262–Phe282 traverse the membrane as a helical segment. Residues Leu283–Val321 lie on the Cytoplasmic side of the membrane.

The protein resides in the membrane. Functionally, involved in the normal targeting of ventral muscle, muscle 12, by motoneurons. May function as an axon guidance molecule involved in neuromuscular specificity. The protein is Transmembrane protein fend (fend) of Drosophila melanogaster (Fruit fly).